The sequence spans 331 residues: Glyceraldehyde-3-phosphate dehydrogenase (331 aa).

NAD(+)-binding positions include 12–13, aspartate 34, arginine 78, and threonine 120; that span reads RI. D-glyceraldehyde 3-phosphate-binding positions include 149 to 151, threonine 180, 209 to 210, and arginine 232; these read SCT and TG. Cysteine 150 functions as the Nucleophile in the catalytic mechanism. Asparagine 314 contacts NAD(+).

It belongs to the glyceraldehyde-3-phosphate dehydrogenase family. As to quaternary structure, homotetramer.

It is found in the cytoplasm. It carries out the reaction D-glyceraldehyde 3-phosphate + phosphate + NAD(+) = (2R)-3-phospho-glyceroyl phosphate + NADH + H(+). It functions in the pathway carbohydrate degradation; glycolysis; pyruvate from D-glyceraldehyde 3-phosphate: step 1/5. Catalyzes the oxidative phosphorylation of glyceraldehyde 3-phosphate (G3P) to 1,3-bisphosphoglycerate (BPG) using the cofactor NAD. The first reaction step involves the formation of a hemiacetal intermediate between G3P and a cysteine residue, and this hemiacetal intermediate is then oxidized to a thioester, with concomitant reduction of NAD to NADH. The reduced NADH is then exchanged with the second NAD, and the thioester is attacked by a nucleophilic inorganic phosphate to produce BPG. The sequence is that of Glyceraldehyde-3-phosphate dehydrogenase (gapA) from Shimwellia blattae (strain ATCC 29907 / DSM 4481 / JCM 1650 / NBRC 105725 / CDC 9005-74) (Escherichia blattae).